Consider the following 515-residue polypeptide: Maturase K (515 aa).

The protein belongs to the intron maturase 2 family. MatK subfamily.

It is found in the plastid. It localises to the chloroplast. Its function is as follows. Usually encoded in the trnK tRNA gene intron. Probably assists in splicing its own and other chloroplast group II introns. This is Maturase K from Pinus sibirica (Siberian pine).